The sequence spans 617 residues: Procollagen galactosyltransferase 1 (617 aa).

Residues 1-31 (MAALPRGSRGLPLLPLLLLLPPLGGPRGADG) form the signal peptide. N91, N179, and N376 each carry an N-linked (GlcNAc...) asparagine glycan. Basic and acidic residues predominate over residues 582–601 (DRAKSQKMREQQALSREAKN). A disordered region spans residues 582–617 (DRAKSQKMREQQALSREAKNSDVLQSPLDSTARDEL). The Prevents secretion from ER motif lies at 614–617 (RDEL).

This sequence belongs to the glycosyltransferase 25 family. In terms of processing, N-glycosylated.

It is found in the endoplasmic reticulum lumen. It catalyses the reaction (5R)-5-hydroxy-L-lysyl-[collagen] + UDP-alpha-D-galactose = (5R)-5-O-(beta-D-galactosyl)-5-hydroxy-L-lysyl-[collagen] + UDP + H(+). In terms of biological role, beta-galactosyltransferase that transfers beta-galactose to hydroxylysine residues of type I collagen. By acting on collagen glycosylation, facilitates the formation of collagen triple helix. Also involved in the biosynthesis of collagen type IV. The polypeptide is Procollagen galactosyltransferase 1 (Colgalt1) (Mus musculus (Mouse)).